The primary structure comprises 57 residues: Small ribosomal subunit protein bS21 (57 aa).

It belongs to the bacterial ribosomal protein bS21 family.

This Bacillus cytotoxicus (strain DSM 22905 / CIP 110041 / 391-98 / NVH 391-98) protein is Small ribosomal subunit protein bS21.